The chain runs to 225 residues: Biosynthetic peptidoglycan transglycosylase (225 aa).

A helical membrane pass occupies residues 7–27; sequence SFLFKMVLILLIAPIVLVGVV.

This sequence belongs to the glycosyltransferase 51 family.

The protein localises to the cell inner membrane. It carries out the reaction [GlcNAc-(1-&gt;4)-Mur2Ac(oyl-L-Ala-gamma-D-Glu-L-Lys-D-Ala-D-Ala)](n)-di-trans,octa-cis-undecaprenyl diphosphate + beta-D-GlcNAc-(1-&gt;4)-Mur2Ac(oyl-L-Ala-gamma-D-Glu-L-Lys-D-Ala-D-Ala)-di-trans,octa-cis-undecaprenyl diphosphate = [GlcNAc-(1-&gt;4)-Mur2Ac(oyl-L-Ala-gamma-D-Glu-L-Lys-D-Ala-D-Ala)](n+1)-di-trans,octa-cis-undecaprenyl diphosphate + di-trans,octa-cis-undecaprenyl diphosphate + H(+). The protein operates within cell wall biogenesis; peptidoglycan biosynthesis. Functionally, peptidoglycan polymerase that catalyzes glycan chain elongation from lipid-linked precursors. In Vibrio parahaemolyticus serotype O3:K6 (strain RIMD 2210633), this protein is Biosynthetic peptidoglycan transglycosylase.